The following is a 328-amino-acid chain: Gonadotropin-releasing hormone receptor (328 aa).

At 1 to 38 (MQDDTSSEQNPTHCSAINSSVPLVQGALPTLTLSGKIR) the chain is on the extracellular side. A glycan (N-linked (GlcNAc...) asparagine) is linked at Asn18. A helical membrane pass occupies residues 39 to 59 (VTVTFFLFLVSTTLNASFLLK). The Cytoplasmic segment spans residues 60–84 (LQKWTQKKEKGKKLSRMKVLLKHLT). A helical membrane pass occupies residues 85–105 (LANLLETLIVMPLDGMWNITV). The Extracellular portion of the chain corresponds to 106-115 (QWYAGELLCK). Residues Cys114 and Cys196 are joined by a disulfide bond. The chain crosses the membrane as a helical span at residues 116-136 (ILSYLKLFSMYAPAFMMVVIS). Over 137 to 160 (LDRSMAITRPLPVQSNRKLEQSMT) the chain is Cytoplasmic. Residues 161-181 (GLAWGLSSVLAGPQLYIFKMI) traverse the membrane as a helical segment. The Extracellular portion of the chain corresponds to 182–208 (HLENGPGQTEVFSQCVTHCSFPQWWHQ). Residues 209 to 229 (AFYNFFTFICLFIIPLLIMLI) traverse the membrane as a helical segment. The Cytoplasmic portion of the chain corresponds to 230-271 (CNAKIIFTLTQVLQQDSNKLQLNQSKNNIPRARLRTLKMTVA). The helical transmembrane segment at 272–292 (FAASFIVCWTPYYVLGLWYWF) threads the bilayer. At 293–306 (DPGMLHRMSEPVNH) the chain is on the extracellular side. Residues 307-327 (FFFLFAFLNPCFDPLIYGYFS) traverse the membrane as a helical segment. A topological domain (cytoplasmic) is located at residue Leu328.

Belongs to the G-protein coupled receptor 1 family.

The protein resides in the cell membrane. Receptor for gonadotropin releasing hormone (GnRH) that mediates the action of GnRH to stimulate the secretion of the gonadotropic hormones luteinizing hormone (LH) and follicle-stimulating hormone (FSH). This receptor mediates its action by association with G-proteins that activate a phosphatidylinositol-calcium second messenger system. The polypeptide is Gonadotropin-releasing hormone receptor (GNRHR) (Cavia porcellus (Guinea pig)).